We begin with the raw amino-acid sequence, 456 residues long: Probable transcription factor At3g04930 (456 aa).

Residues 1–71 form a disordered region; it reads MTSDHRDALF…LNSPSTSSLP (71 aa). Composition is skewed to acidic residues over residues 15-38 and 50-62; these read ESPD…DLRD and AEAE…EEDL. Ser16 is subject to Phosphoserine.

This sequence belongs to the GeBP family.

The sequence is that of Probable transcription factor At3g04930 from Arabidopsis thaliana (Mouse-ear cress).